The primary structure comprises 660 residues: Protein FAM161A (660 aa).

2 coiled-coil regions span residues 93–120 and 296–320; these read EEYFKKVEELKAAHIETMAKLEKMYQDK and YHDLVKQKEERRRSLKEKSKEALLA. A required for interaction with CFAP418 region spans residues 341–525; it reads QLRDFLKYKK…PTVSSRGREQ (185 aa). Glycyl lysine isopeptide (Lys-Gly) (interchain with G-Cter in SUMO2) cross-links involve residues K468 and K484. Positions 522–552 form a coiled coil; sequence GREQAVRKSEKERMREYQRELEEREEKLKKR. The tract at residues 605–660 is disordered; the sequence is KSVTEDKESFNEEEKIEERENGEENYFIDTNSQDSYKEKDEANEESEEEKSVEESH. Positions 606–623 are enriched in basic and acidic residues; it reads SVTEDKESFNEEEKIEER. Residues 645–660 show a composition bias toward acidic residues; it reads EANEESEEEKSVEESH.

It belongs to the FAM161 family. As to quaternary structure, interacts (via central region) with CFAP418 (via N-terminus); the interaction is direct. Interacts (via C-terminus) with microtubules. Interacts with LCA5. Interacts with CEP290. Interacts with SDCCAG8. Interacts with FAM161B. Interacts with POC1B. Interacts with CEP78. Forms a microtubule-associated complex with POC5, CETN2 and POC1B. Interacts with CCDC15. Isoform 1 and isoform 3 are widely expressed with highest levels in retina and testis, with isoform 1 being the most abundant in all tissues tested.

Its subcellular location is the cytoplasm. It localises to the cytoskeleton. It is found in the cilium basal body. The protein resides in the cell projection. The protein localises to the cilium. Its subcellular location is the microtubule organizing center. It localises to the centrosome. It is found in the centriole. Functionally, involved in ciliogenesis. The chain is Protein FAM161A (FAM161A) from Homo sapiens (Human).